A 409-amino-acid polypeptide reads, in one-letter code: Elongation factor Tu (409 aa).

The 205-residue stretch at 10 to 214 folds into the tr-type G domain; it reads KPHVNIGTIG…EVDAYIPEPE (205 aa). The tract at residues 19-26 is G1; that stretch reads GHVDHGKT. GTP is bound at residue 19–26; sequence GHVDHGKT. Residue Thr-26 coordinates Mg(2+). The G2 stretch occupies residues 60–64; sequence GITIN. Positions 81 to 84 are G3; the sequence is DCPG. Residues 81–85 and 136–139 contribute to the GTP site; these read DCPGH and NKQD. A G4 region spans residues 136-139; the sequence is NKQD. Residues 174 to 176 are G5; sequence SAL.

The protein belongs to the TRAFAC class translation factor GTPase superfamily. Classic translation factor GTPase family. EF-Tu/EF-1A subfamily. Monomer.

The protein localises to the cytoplasm. The enzyme catalyses GTP + H2O = GDP + phosphate + H(+). Functionally, GTP hydrolase that promotes the GTP-dependent binding of aminoacyl-tRNA to the A-site of ribosomes during protein biosynthesis. In Rippkaea orientalis (strain PCC 8801 / RF-1) (Cyanothece sp. (strain PCC 8801)), this protein is Elongation factor Tu.